The following is a 114-amino-acid chain: T cell receptor beta variable 3-1 (114 aa).

An N-terminal signal peptide occupies residues 1–21; the sequence is MGCRLLCCVVFCLLQAGPLDT. Residues 22 to 114 enclose the Ig-like domain; sequence AVSQTPKYLV…SAVYFCASSQ (93 aa). A disulfide bridge connects residues Cys42 and Cys110. Asn76 is a glycosylation site (N-linked (GlcNAc...) asparagine).

Alpha-beta TR is a heterodimer composed of an alpha and beta chain; disulfide-linked. The alpha-beta TR is associated with the transmembrane signaling CD3 coreceptor proteins to form the TR-CD3 (TcR or TCR). The assembly of alpha-beta TR heterodimers with CD3 occurs in the endoplasmic reticulum where a single alpha-beta TR heterodimer associates with one CD3D-CD3E heterodimer, one CD3G-CD3E heterodimer and one CD247 homodimer forming a stable octameric structure. CD3D-CD3E and CD3G-CD3E heterodimers preferentially associate with TR alpha and TR beta chains, respectively. The association of the CD247 homodimer is the last step of TcR assembly in the endoplasmic reticulum and is required for transport to the cell surface.

The protein localises to the cell membrane. Functionally, v region of the variable domain of T cell receptor (TR) beta chain that participates in the antigen recognition. Alpha-beta T cell receptors are antigen specific receptors which are essential to the immune response and are present on the cell surface of T lymphocytes. Recognize peptide-major histocompatibility (MH) (pMH) complexes that are displayed by antigen presenting cells (APC), a prerequisite for efficient T cell adaptive immunity against pathogens. Binding of alpha-beta TR to pMH complex initiates TR-CD3 clustering on the cell surface and intracellular activation of LCK that phosphorylates the ITAM motifs of CD3G, CD3D, CD3E and CD247 enabling the recruitment of ZAP70. In turn ZAP70 phosphorylates LAT, which recruits numerous signaling molecules to form the LAT signalosome. The LAT signalosome propagates signal branching to three major signaling pathways, the calcium, the mitogen-activated protein kinase (MAPK) kinase and the nuclear factor NF-kappa-B (NF-kB) pathways, leading to the mobilization of transcription factors that are critical for gene expression and essential for T cell growth and differentiation. The T cell repertoire is generated in the thymus, by V-(D)-J rearrangement. This repertoire is then shaped by intrathymic selection events to generate a peripheral T cell pool of self-MH restricted, non-autoaggressive T cells. Post-thymic interaction of alpha-beta TR with the pMH complexes shapes TR structural and functional avidity. This is T cell receptor beta variable 3-1 from Homo sapiens (Human).